Here is a 177-residue protein sequence, read N- to C-terminus: ATP synthase subunit delta (177 aa).

This sequence belongs to the ATPase delta chain family. In terms of assembly, F-type ATPases have 2 components, F(1) - the catalytic core - and F(0) - the membrane proton channel. F(1) has five subunits: alpha(3), beta(3), gamma(1), delta(1), epsilon(1). F(0) has three main subunits: a(1), b(2) and c(10-14). The alpha and beta chains form an alternating ring which encloses part of the gamma chain. F(1) is attached to F(0) by a central stalk formed by the gamma and epsilon chains, while a peripheral stalk is formed by the delta and b chains.

Its subcellular location is the cell inner membrane. Its function is as follows. F(1)F(0) ATP synthase produces ATP from ADP in the presence of a proton or sodium gradient. F-type ATPases consist of two structural domains, F(1) containing the extramembraneous catalytic core and F(0) containing the membrane proton channel, linked together by a central stalk and a peripheral stalk. During catalysis, ATP synthesis in the catalytic domain of F(1) is coupled via a rotary mechanism of the central stalk subunits to proton translocation. Functionally, this protein is part of the stalk that links CF(0) to CF(1). It either transmits conformational changes from CF(0) to CF(1) or is implicated in proton conduction. In Aliivibrio fischeri (strain MJ11) (Vibrio fischeri), this protein is ATP synthase subunit delta.